We begin with the raw amino-acid sequence, 273 residues long: Tryptophan synthase alpha chain (273 aa).

Active-site proton acceptor residues include glutamate 49 and aspartate 60.

Belongs to the TrpA family. In terms of assembly, tetramer of two alpha and two beta chains.

The catalysed reaction is (1S,2R)-1-C-(indol-3-yl)glycerol 3-phosphate + L-serine = D-glyceraldehyde 3-phosphate + L-tryptophan + H2O. Its pathway is amino-acid biosynthesis; L-tryptophan biosynthesis; L-tryptophan from chorismate: step 5/5. Functionally, the alpha subunit is responsible for the aldol cleavage of indoleglycerol phosphate to indole and glyceraldehyde 3-phosphate. The chain is Tryptophan synthase alpha chain from Albidiferax ferrireducens (strain ATCC BAA-621 / DSM 15236 / T118) (Rhodoferax ferrireducens).